We begin with the raw amino-acid sequence, 689 residues long: Glycine--tRNA ligase beta subunit (689 aa).

The protein belongs to the class-II aminoacyl-tRNA synthetase family. As to quaternary structure, tetramer of two alpha and two beta subunits.

The protein localises to the cytoplasm. The catalysed reaction is tRNA(Gly) + glycine + ATP = glycyl-tRNA(Gly) + AMP + diphosphate. This is Glycine--tRNA ligase beta subunit from Citrobacter koseri (strain ATCC BAA-895 / CDC 4225-83 / SGSC4696).